We begin with the raw amino-acid sequence, 1242 residues long: DNA-directed RNA polymerase RPB2 homolog (1242 aa).

The segment at 1180–1201 adopts a C4-type zinc-finger fold; it reads CRNCGEPAIYNASHPIYKCMNC.

Belongs to the RNA polymerase beta chain family. In terms of assembly, part of the viral DNA-directed RNA polymerase that consists of 8 polII-like subunits (RPB1, RPB2, RPB3, RPB5, RPB6, RPB7, RPB9, RPB10), a capping enzyme and a termination factor.

The protein localises to the host cytoplasm. It localises to the virion. The enzyme catalyses RNA(n) + a ribonucleoside 5'-triphosphate = RNA(n+1) + diphosphate. Functionally, catalytic component of the DNA-directed RNA polymerase (RNAP) that catalyzes the transcription in the cytoplasm of viral DNA into RNA using the four ribonucleoside triphosphates as substrates. Forms the polymerase active center together with RPB1. Part of the core element with the central large cleft, the clamp element that moves to open and close the cleft and the jaws that are thought to grab the incoming DNA template. In African swine fever virus (isolate Tick/Malawi/Lil 20-1/1983) (ASFV), this protein is DNA-directed RNA polymerase RPB2 homolog.